The chain runs to 255 residues: Ras-like protein family member 12 (255 aa).

Residues 30–37, 77–81, and 137–140 contribute to the GTP site; these read GAMGSGKS, DTADQ, and NKVD.

It belongs to the small GTPase superfamily. Ras family.

It catalyses the reaction GTP + H2O = GDP + phosphate + H(+). This chain is Ras-like protein family member 12 (RASL12), found in Danio rerio (Zebrafish).